We begin with the raw amino-acid sequence, 253 residues long: Dihydroanticapsin 7-dehydrogenase (253 aa).

9-31 contacts NAD(+); that stretch reads LITGGASGIGYAAVQAFLGQQAN. Substrate is bound at residue Ser139. Tyr152 (proton acceptor) is an active-site residue.

This sequence belongs to the short-chain dehydrogenases/reductases (SDR) family.

It carries out the reaction L-dihydroanticapsin + NAD(+) = L-anticapsin + NADH + H(+). It functions in the pathway antibiotic biosynthesis; bacilysin biosynthesis. Its function is as follows. Part of the bacABCDEFG operon responsible for the biosynthesis of bacilysin, an irreversible inactivator of the glutaminase domain of glucosamine synthetase. Catalyzes the dehydrogenation of the C7-hydroxyl group in the 4S-tetrahydrotyrosine (4S-H4Tyr) to yield anticapsin (epoxycyclohexanonyl-Ala). It is not able to oxidize the 4R-H4Tyr diastereomer and the dihydrobacilysin dipeptide (L-Ala-4S-H4Tyr dipeptide). The protein is Dihydroanticapsin 7-dehydrogenase of Bacillus subtilis (strain 168).